A 154-amino-acid polypeptide reads, in one-letter code: Transcriptional repressor NrdR (154 aa).

A zinc finger spans residues Cys3–Cys34. Residues Leu46–Asp136 form the ATP-cone domain.

Belongs to the NrdR family. Requires Zn(2+) as cofactor.

Functionally, negatively regulates transcription of bacterial ribonucleotide reductase nrd genes and operons by binding to NrdR-boxes. The polypeptide is Transcriptional repressor NrdR (Mycolicibacterium vanbaalenii (strain DSM 7251 / JCM 13017 / BCRC 16820 / KCTC 9966 / NRRL B-24157 / PYR-1) (Mycobacterium vanbaalenii)).